Here is a 103-residue protein sequence, read N- to C-terminus: Large ribosomal subunit protein uL24 (103 aa).

Belongs to the universal ribosomal protein uL24 family. In terms of assembly, part of the 50S ribosomal subunit.

Functionally, one of two assembly initiator proteins, it binds directly to the 5'-end of the 23S rRNA, where it nucleates assembly of the 50S subunit. In terms of biological role, one of the proteins that surrounds the polypeptide exit tunnel on the outside of the subunit. This chain is Large ribosomal subunit protein uL24, found in Treponema pallidum (strain Nichols).